Reading from the N-terminus, the 213-residue chain is Thymidylate kinase (213 aa).

Gly9 to Thr16 contributes to the ATP binding site.

It belongs to the thymidylate kinase family.

It catalyses the reaction dTMP + ATP = dTDP + ADP. Functionally, phosphorylation of dTMP to form dTDP in both de novo and salvage pathways of dTTP synthesis. This chain is Thymidylate kinase, found in Geotalea uraniireducens (strain Rf4) (Geobacter uraniireducens).